Consider the following 300-residue polypeptide: Ribonuclease HIII (300 aa).

One can recognise an RNase H type-2 domain in the interval 83–300 (IPIIGSDEVG…THKAQALLTK (218 aa)). The a divalent metal cation site is built by D89, E90, and D194.

Belongs to the RNase HII family. RnhC subfamily. It depends on Mn(2+) as a cofactor. Mg(2+) serves as cofactor.

It is found in the cytoplasm. It carries out the reaction Endonucleolytic cleavage to 5'-phosphomonoester.. Endonuclease that specifically degrades the RNA of RNA-DNA hybrids. This Streptococcus pyogenes serotype M3 (strain ATCC BAA-595 / MGAS315) protein is Ribonuclease HIII.